A 663-amino-acid polypeptide reads, in one-letter code: UvrABC system protein B (663 aa).

Residues 31–271 (DNIEGGEKAQ…EQSISKIQAE (241 aa)) enclose the Helicase ATP-binding domain. 44 to 51 (GATGTGKT) is an ATP binding site. The Beta-hairpin motif lies at 97–120 (YYDYYQPEAYVPSSDTYIEKDSSV). In terms of domain architecture, Helicase C-terminal spans 435–601 (QMDDLLGEIN…TIKKDIRDLI (167 aa)). One can recognise a UVR domain in the interval 627–662 (QEAIKQLQKNMQEAAELLDFELAAQLRDLILELKAM).

This sequence belongs to the UvrB family. Forms a heterotetramer with UvrA during the search for lesions. Interacts with UvrC in an incision complex.

The protein localises to the cytoplasm. Functionally, the UvrABC repair system catalyzes the recognition and processing of DNA lesions. A damage recognition complex composed of 2 UvrA and 2 UvrB subunits scans DNA for abnormalities. Upon binding of the UvrA(2)B(2) complex to a putative damaged site, the DNA wraps around one UvrB monomer. DNA wrap is dependent on ATP binding by UvrB and probably causes local melting of the DNA helix, facilitating insertion of UvrB beta-hairpin between the DNA strands. Then UvrB probes one DNA strand for the presence of a lesion. If a lesion is found the UvrA subunits dissociate and the UvrB-DNA preincision complex is formed. This complex is subsequently bound by UvrC and the second UvrB is released. If no lesion is found, the DNA wraps around the other UvrB subunit that will check the other stand for damage. The polypeptide is UvrABC system protein B (Streptococcus equi subsp. zooepidemicus (strain H70)).